The primary structure comprises 238 residues: Isoprene-epoxide--glutathione S-transferase (238 aa).

The 76-residue stretch at 7 to 82 (YVPAWGIPDI…YLKNKFGDKL (76 aa)) folds into the GST N-terminal domain. One can recognise a GST C-terminal domain in the interval 118–238 (DAGWETYIPF…LERIRKQYDI (121 aa)).

The protein belongs to the GST superfamily. Homodimer.

The catalysed reaction is 2-glutathionyl-2-methylbut-3-en-1-ol = (3R)-3,4-epoxy-3-methylbut-1-ene + glutathione. Its activity is regulated as follows. Activity is inhibited by 1,2-epoxyhexane. Involved in isoprene degradation. Catalyzes the glutathione-dependent ring opening of various epoxides. The highest conversion rate is observed with the physiological substrate, 3,4-epoxy-3-methyl-1-butene, which is the primary oxidation product of isoprene. It can also use other epoxides, including epoxyethane, epoxypropane, epithiopropane, epichlorohydrin, epifluorohydrin, epibromohydrin, 1,2-epoxybutane, 1,2-epoxyhexane, cis-2,3-epoxybutane, cis-1,2-dichloroepoxyethane and trans-1,2-dichloroepoxyethane. The protein is Isoprene-epoxide--glutathione S-transferase of Rhodococcus sp. (strain AD45).